A 3828-amino-acid polypeptide reads, in one-letter code: Histone-lysine N-methyltransferase trithorax (3828 aa).

Disordered stretches follow at residues 25-179 (EDEA…AAAA), 356-390 (AVKS…ATKQ), and 512-589 (FRKQ…RSTR). Residues 29 to 57 (ASAAAAAAAATAATTEQHQQSEQSAGSSA) are compositionally biased toward low complexity. Positions 77-89 (AATSGNRGASSGA) are enriched in polar residues. Residues 101-114 (GNGSSTGSKTTNGG) are compositionally biased toward low complexity. Over residues 152-165 (DGTEDTNNDDDDDS) the composition is skewed to acidic residues. Residues 359–387 (SSGSSPNPNHNPNAVAGSTSAAAPGAPTA) are compositionally biased toward low complexity. Over residues 513–523 (RKQEPQHKTPE) the composition is skewed to basic and acidic residues. Positions 524 to 553 (DNDDDGSASSDAIEDDEDIDDDDAEENEEA) are enriched in acidic residues. Residues 554 to 581 (ASEKSAETTASVDEKEADDRQLVMDKHF) show a composition bias toward basic and acidic residues. The segment at residues 725–839 (ASTCAVCSAP…AGHRSRLSAI (115 aa)) is a DNA-binding region (nuclear receptor). 3 disordered regions span residues 933 to 1036 (ESKE…SAVP), 1075 to 1094 (ELAA…TTSP), and 1131 to 1170 (AQPA…TTRN). Basic and acidic residues predominate over residues 960–974 (AKQDKEKARELEAEK). Composition is skewed to low complexity over residues 998–1022 (ASTT…TNSS) and 1078–1094 (AAEA…TTSP). The segment covering 1140–1170 (ESRSSKSNTQTEAKKTPATSGSSKGKVTTRN) has biased composition (polar residues). 3 consecutive PHD-type zinc fingers follow at residues 1251 to 1334 (RALC…CTVC), 1335 to 1380 (YTCN…CLKC), and 1408 to 1469 (GNFC…CARR). Residues 1483–1644 (AVMEEFKSSL…SEQFPWFQNE (162 aa)) enclose the Bromo domain. The C2HC pre-PHD-type zinc finger occupies 1708–1748 (TRVCLFCRKSGEGLSGEEARLLYCGHDCWVHINCAMWSAEV). Residues 1769–1816 (IKCTVCGNRGATVGCNVKSCGEHYHYPCARTIDCAFLTDKSMYCPAHA) form a PHD-type 4 zinc finger. Residues 1856–1913 (KVQFHIGSVAVRQLGSIVPRFSDSFEAIVPINFLCSRLYWSSKEPWKIVEYTVRTTIQ) enclose the FYR N-terminal domain. 8 disordered regions span residues 2252 to 2272 (CEPM…AQLS), 2464 to 2510 (AHQK…QQQQ), 2826 to 2848 (RNTN…PQQS), 2897 to 2973 (RQQQ…SPAA), 2988 to 3031 (APAP…QLSM), 3117 to 3178 (ASAN…VPAG), 3314 to 3338 (NGSG…DDDD), and 3457 to 3487 (KLDV…PMRD). Low complexity-rich tracts occupy residues 2253-2268 (EPMS…ATGT), 2483-2510 (QGQQ…QQQQ), and 2836-2848 (SVLS…PQQS). Over residues 2897–2917 (RQQQANELKNKQAAGQQTGST) the composition is skewed to polar residues. Composition is skewed to low complexity over residues 2956-2973 (ATSA…SPAA), 2988-2997 (APAPQPQQQE), 3005-3031 (LHQQ…QLSM), and 3117-3132 (ASAN…QQNS). Over residues 3148-3164 (QQRQEPTPLSNDVVVQS) the composition is skewed to polar residues. The span at 3328–3338 (DDAEEDEDDDD) shows a compositional bias: acidic residues. The FYR C-terminal domain occupies 3493–3577 (GPHLLYEIQS…EKCVKYTPKY (85 aa)). One can recognise an SET domain in the interval 3690-3806 (DYVGVFRSHI…QGEELTYDYK (117 aa)). S-adenosyl-L-methionine-binding positions include histidine 3700, arginine 3702, tyrosine 3744, and 3767 to 3768 (NH). The Zn(2+) site is built by cysteine 3770, cysteine 3816, cysteine 3818, and cysteine 3823. The 17-residue stretch at 3812-3828 (EKIPCSCGSKRCRKYLN) folds into the Post-SET domain.

The protein belongs to the class V-like SAM-binding methyltransferase superfamily. Histone-lysine methyltransferase family. TRX/MLL subfamily. As to quaternary structure, interacts with ash1 via its SET domain.

The protein localises to the nucleus. The catalysed reaction is L-lysyl(9)-[histone H3] + 3 S-adenosyl-L-methionine = N(6),N(6),N(6)-trimethyl-L-lysyl(9)-[histone H3] + 3 S-adenosyl-L-homocysteine + 3 H(+). Functionally, histone methyltransferase that methylates 'Lys-4' of histone H3 (H3K4me). H3K4me represents a specific tag for epigenetic transcriptional activation. Functions in segment determination through interaction with genes of bithorax (BX-C) and antennapedia (ANT-C) complexes. Acts as an activator of BX-C. Involved in the very early regulation of homeotic genes expressed only in the posterior region of the embryo. In Drosophila virilis (Fruit fly), this protein is Histone-lysine N-methyltransferase trithorax (trx).